A 422-amino-acid polypeptide reads, in one-letter code: Dihydroorotase (422 aa).

Zn(2+)-binding residues include histidine 59 and histidine 61. Substrate is bound by residues 61 to 63 (HFR) and asparagine 93. 3 residues coordinate Zn(2+): aspartate 150, histidine 177, and histidine 230. Residue asparagine 276 participates in substrate binding. Aspartate 303 provides a ligand contact to Zn(2+). The active site involves aspartate 303. A substrate-binding site is contributed by histidine 307.

This sequence belongs to the metallo-dependent hydrolases superfamily. DHOase family. Class I DHOase subfamily. It depends on Zn(2+) as a cofactor.

The enzyme catalyses (S)-dihydroorotate + H2O = N-carbamoyl-L-aspartate + H(+). It participates in pyrimidine metabolism; UMP biosynthesis via de novo pathway; (S)-dihydroorotate from bicarbonate: step 3/3. Functionally, catalyzes the reversible cyclization of carbamoyl aspartate to dihydroorotate. This is Dihydroorotase from Streptococcus pyogenes serotype M1.